A 535-amino-acid chain; its full sequence is Beta-glucosidase 47 (535 aa).

The N-terminal stretch at M1–S38 is a signal peptide. Q73 is an a beta-D-glucoside binding site. N-linked (GlcNAc...) asparagine glycosylation is present at N93. Residues H175 and N220 to E221 contribute to the a beta-D-glucoside site. E221 acts as the Proton donor in catalysis. C240 and C247 are joined by a disulfide. N246 carries N-linked (GlcNAc...) asparagine glycosylation. Y363 serves as a coordination point for a beta-D-glucoside. A disulfide bridge links C371 with C376. The N-linked (GlcNAc...) asparagine glycan is linked to N419. Position 426 (E426) interacts with a beta-D-glucoside. E426 acts as the Nucleophile in catalysis. N-linked (GlcNAc...) asparagine glycosylation is present at N432. A beta-D-glucoside contacts are provided by residues W470, E477–W478, and F486.

This sequence belongs to the glycosyl hydrolase 1 family.

The catalysed reaction is Hydrolysis of terminal, non-reducing beta-D-glucosyl residues with release of beta-D-glucose.. The chain is Beta-glucosidase 47 from Arabidopsis thaliana (Mouse-ear cress).